The chain runs to 315 residues: 4-diphosphocytidyl-2-C-methyl-D-erythritol kinase (315 aa).

The active site involves Lys-26. 111 to 121 (PLAGGLAGGSA) provides a ligand contact to ATP. Asp-153 is an active-site residue.

The protein belongs to the GHMP kinase family. IspE subfamily.

It carries out the reaction 4-CDP-2-C-methyl-D-erythritol + ATP = 4-CDP-2-C-methyl-D-erythritol 2-phosphate + ADP + H(+). Its pathway is isoprenoid biosynthesis; isopentenyl diphosphate biosynthesis via DXP pathway; isopentenyl diphosphate from 1-deoxy-D-xylulose 5-phosphate: step 3/6. Functionally, catalyzes the phosphorylation of the position 2 hydroxy group of 4-diphosphocytidyl-2C-methyl-D-erythritol. This is 4-diphosphocytidyl-2-C-methyl-D-erythritol kinase from Salinispora arenicola (strain CNS-205).